The chain runs to 500 residues: Histidine ammonia-lyase (500 aa).

Positions 141-143 (ASG) form a cross-link, 5-imidazolinone (Ala-Gly). Ser142 carries the post-translational modification 2,3-didehydroalanine (Ser).

It belongs to the PAL/histidase family. Post-translationally, contains an active site 4-methylidene-imidazol-5-one (MIO), which is formed autocatalytically by cyclization and dehydration of residues Ala-Ser-Gly.

The protein resides in the cytoplasm. It catalyses the reaction L-histidine = trans-urocanate + NH4(+). It functions in the pathway amino-acid degradation; L-histidine degradation into L-glutamate; N-formimidoyl-L-glutamate from L-histidine: step 1/3. This chain is Histidine ammonia-lyase, found in Shouchella clausii (strain KSM-K16) (Alkalihalobacillus clausii).